The primary structure comprises 183 residues: ATP synthase subunit b, chloroplastic (183 aa).

The helical transmembrane segment at 25–45 threads the bilayer; that stretch reads DILATNLINLTVVVGVLIFFG.

The protein belongs to the ATPase B chain family. As to quaternary structure, F-type ATPases have 2 components, F(1) - the catalytic core - and F(0) - the membrane proton channel. F(1) has five subunits: alpha(3), beta(3), gamma(1), delta(1), epsilon(1). F(0) has four main subunits: a(1), b(1), b'(1) and c(10-14). The alpha and beta chains form an alternating ring which encloses part of the gamma chain. F(1) is attached to F(0) by a central stalk formed by the gamma and epsilon chains, while a peripheral stalk is formed by the delta, b and b' chains.

The protein resides in the plastid. It localises to the chloroplast thylakoid membrane. Its function is as follows. F(1)F(0) ATP synthase produces ATP from ADP in the presence of a proton or sodium gradient. F-type ATPases consist of two structural domains, F(1) containing the extramembraneous catalytic core and F(0) containing the membrane proton channel, linked together by a central stalk and a peripheral stalk. During catalysis, ATP synthesis in the catalytic domain of F(1) is coupled via a rotary mechanism of the central stalk subunits to proton translocation. In terms of biological role, component of the F(0) channel, it forms part of the peripheral stalk, linking F(1) to F(0). The sequence is that of ATP synthase subunit b, chloroplastic from Zea mays (Maize).